Reading from the N-terminus, the 224-residue chain is Ribosomal RNA small subunit methyltransferase I (224 aa).

Belongs to the methyltransferase superfamily. RsmI family.

The protein resides in the cytoplasm. It carries out the reaction cytidine(1402) in 16S rRNA + S-adenosyl-L-methionine = 2'-O-methylcytidine(1402) in 16S rRNA + S-adenosyl-L-homocysteine + H(+). In terms of biological role, catalyzes the 2'-O-methylation of the ribose of cytidine 1402 (C1402) in 16S rRNA. In Borrelia garinii subsp. bavariensis (strain ATCC BAA-2496 / DSM 23469 / PBi) (Borreliella bavariensis), this protein is Ribosomal RNA small subunit methyltransferase I.